The chain runs to 504 residues: Anaerobic nitric oxide reductase transcription regulator NorR (504 aa).

Asp-57 is modified (4-aspartylphosphate). The region spanning 187-416 (MIGLSPGMTQ…LEHAIHRAVV (230 aa)) is the Sigma-54 factor interaction domain. ATP contacts are provided by residues 215–222 (GETGTGKE) and 278–287 (ADNGTLFLDE). The segment at residues 479–498 (WAASARMLETDVANLHRLAK) is a DNA-binding region (H-T-H motif).

It functions in the pathway nitrogen metabolism; nitric oxide reduction. Functionally, required for the expression of anaerobic nitric oxide (NO) reductase, acts as a transcriptional activator for at least the norVW operon. Activation also requires sigma-54. This Escherichia fergusonii (strain ATCC 35469 / DSM 13698 / CCUG 18766 / IAM 14443 / JCM 21226 / LMG 7866 / NBRC 102419 / NCTC 12128 / CDC 0568-73) protein is Anaerobic nitric oxide reductase transcription regulator NorR.